A 92-amino-acid polypeptide reads, in one-letter code: MEVKTFAFLQIAVIIALGLHLAPAGSNQLSGPQSSANSNDAVFCDTNCTQGTDGAWSGCRGDCFCVHVGNSTEGRCIELIGDFDYSTPGAED.

An N-terminal signal peptide occupies residues 1-24 (MEVKTFAFLQIAVIIALGLHLAPA). Intrachain disulfides connect C44/C63, C48/C65, and C59/C76. Residue N47 is glycosylated (N-linked (GlcNAc...) asparagine). N70 carries an N-linked (GlcNAc...) asparagine glycan.

It localises to the secreted. Salivary chemokine-binding protein which binds to host chemokines CXCL1, CXCL2, CXCL3, CXCL4, CXCL5, CXCL6, CXCL10, CXCL11 and CXCL13. This chain is Evasin P675, found in Ixodes ricinus (Common tick).